The sequence spans 197 residues: dTTP/UTP pyrophosphatase (197 aa).

The active-site Proton acceptor is the Asp-70.

It belongs to the Maf family. YhdE subfamily. Requires a divalent metal cation as cofactor.

It localises to the cytoplasm. It catalyses the reaction dTTP + H2O = dTMP + diphosphate + H(+). The enzyme catalyses UTP + H2O = UMP + diphosphate + H(+). Nucleoside triphosphate pyrophosphatase that hydrolyzes dTTP and UTP. May have a dual role in cell division arrest and in preventing the incorporation of modified nucleotides into cellular nucleic acids. The protein is dTTP/UTP pyrophosphatase (yceF2) of Shigella boydii serotype 4 (strain Sb227).